Here is a 63-residue protein sequence, read N- to C-terminus: Large ribosomal subunit protein bL35 (63 aa).

Belongs to the bacterial ribosomal protein bL35 family.

The protein is Large ribosomal subunit protein bL35 of Campylobacter curvus (strain 525.92).